The following is a 348-amino-acid chain: MSDLSKRDQHVLEAVVTDYIHTGEPVGSRTISKRYGVNVSSATIRNVMADLEEMGFLHQPHTSAGRIPTERGLRFYLDSIMQFKALEEREREMIREAFRNELPDVKELLRRTSRVLSRFCRQAGVVLWPKLTLTLFKRIEFIRLRAHQIMVLLVSKTGLVHHTLVEWEQDIGQEELDKYSRYLNDLLEDMPLGEVKQRVLEEMRDEKVLFDQLYSRALKITDRVFQQNLESSDVYIEGRTNLLNNPEFADVDRMRRILDAFEDKSRIIRLLDRTLRNSTGVQIILGTENDLQELNEISLISSPYRRGDTLLGVMGVIGPLRMDYSRIIPVVEFTADLLSQLLEEPGED.

This sequence belongs to the HrcA family.

Its function is as follows. Negative regulator of class I heat shock genes (grpE-dnaK-dnaJ and groELS operons). Prevents heat-shock induction of these operons. The polypeptide is Heat-inducible transcription repressor HrcA (Syntrophobacter fumaroxidans (strain DSM 10017 / MPOB)).